Consider the following 144-residue polypeptide: Large ribosomal subunit protein uL11 (144 aa).

It belongs to the universal ribosomal protein uL11 family. In terms of assembly, part of the ribosomal stalk of the 50S ribosomal subunit. Interacts with L10 and the large rRNA to form the base of the stalk. L10 forms an elongated spine to which L12 dimers bind in a sequential fashion forming a multimeric L10(L12)X complex. In terms of processing, one or more lysine residues are methylated.

Forms part of the ribosomal stalk which helps the ribosome interact with GTP-bound translation factors. This Francisella tularensis subsp. holarctica (strain OSU18) protein is Large ribosomal subunit protein uL11.